The following is a 285-amino-acid chain: Probable endonuclease 4 (285 aa).

Residues histidine 69, histidine 109, glutamate 145, aspartate 179, histidine 182, histidine 216, aspartate 229, histidine 231, and glutamate 261 each contribute to the Zn(2+) site.

It belongs to the AP endonuclease 2 family. Requires Zn(2+) as cofactor.

The catalysed reaction is Endonucleolytic cleavage to 5'-phosphooligonucleotide end-products.. In terms of biological role, endonuclease IV plays a role in DNA repair. It cleaves phosphodiester bonds at apurinic or apyrimidinic (AP) sites, generating a 3'-hydroxyl group and a 5'-terminal sugar phosphate. The chain is Probable endonuclease 4 from Enterobacter sp. (strain 638).